Consider the following 251-residue polypeptide: Aliphatic sulfonates import ATP-binding protein SsuB (251 aa).

The 229-residue stretch at 3–231 (VSINEVSKYF…PRNKTSQSFQ (229 aa)) folds into the ABC transporter domain. 39 to 46 (GPSGCGKS) is a binding site for ATP.

It belongs to the ABC transporter superfamily. Aliphatic sulfonates importer (TC 3.A.1.17.2) family. As to quaternary structure, the complex is composed of two ATP-binding proteins (SsuB), two transmembrane proteins (SsuC) and a solute-binding protein (SsuA).

It is found in the cell membrane. The enzyme catalyses ATP + H2O + aliphatic sulfonate-[sulfonate-binding protein]Side 1 = ADP + phosphate + aliphatic sulfonateSide 2 + [sulfonate-binding protein]Side 1.. Part of the ABC transporter complex SsuABC involved in aliphatic sulfonates import. Responsible for energy coupling to the transport system. The sequence is that of Aliphatic sulfonates import ATP-binding protein SsuB from Bacillus anthracis.